The chain runs to 434 residues: Enolase (434 aa).

Q165 contributes to the (2R)-2-phosphoglycerate binding site. E207 functions as the Proton donor in the catalytic mechanism. Mg(2+) contacts are provided by D244, E291, and D318. K343, R372, S373, and K394 together coordinate (2R)-2-phosphoglycerate. The active-site Proton acceptor is the K343.

Belongs to the enolase family. It depends on Mg(2+) as a cofactor.

The protein resides in the cytoplasm. It localises to the secreted. It is found in the cell surface. It catalyses the reaction (2R)-2-phosphoglycerate = phosphoenolpyruvate + H2O. It functions in the pathway carbohydrate degradation; glycolysis; pyruvate from D-glyceraldehyde 3-phosphate: step 4/5. Functionally, catalyzes the reversible conversion of 2-phosphoglycerate (2-PG) into phosphoenolpyruvate (PEP). It is essential for the degradation of carbohydrates via glycolysis. The polypeptide is Enolase (Macrococcus caseolyticus (strain JCSC5402) (Macrococcoides caseolyticum)).